We begin with the raw amino-acid sequence, 394 residues long: Ornithine aminotransferase 1 (394 aa).

Lys-252 carries the N6-(pyridoxal phosphate)lysine modification.

This sequence belongs to the class-III pyridoxal-phosphate-dependent aminotransferase family. OAT subfamily. It depends on pyridoxal 5'-phosphate as a cofactor.

It localises to the cytoplasm. The enzyme catalyses a 2-oxocarboxylate + L-ornithine = L-glutamate 5-semialdehyde + an L-alpha-amino acid. The protein operates within amino-acid biosynthesis; L-proline biosynthesis; L-glutamate 5-semialdehyde from L-ornithine: step 1/1. In terms of biological role, catalyzes the interconversion of ornithine to glutamate semialdehyde. This chain is Ornithine aminotransferase 1, found in Staphylococcus aureus (strain COL).